The primary structure comprises 260 residues: Indole-3-glycerol phosphate synthase (260 aa).

It belongs to the TrpC family.

The catalysed reaction is 1-(2-carboxyphenylamino)-1-deoxy-D-ribulose 5-phosphate + H(+) = (1S,2R)-1-C-(indol-3-yl)glycerol 3-phosphate + CO2 + H2O. It functions in the pathway amino-acid biosynthesis; L-tryptophan biosynthesis; L-tryptophan from chorismate: step 4/5. This Lacticaseibacillus paracasei (strain ATCC 334 / BCRC 17002 / CCUG 31169 / CIP 107868 / KCTC 3260 / NRRL B-441) (Lactobacillus paracasei) protein is Indole-3-glycerol phosphate synthase.